Reading from the N-terminus, the 279-residue chain is Small ribosomal subunit protein uS2 (279 aa).

3 stretches are compositionally biased toward acidic residues: residues 1-18 (MTEN…DEAV), 28-42 (TATE…DESN), and 65-81 (ADAE…FDED). Residues 1–81 (MTENDNEVVE…ELEGPTFDED (81 aa)) form a disordered region.

It belongs to the universal ribosomal protein uS2 family.

This Haloquadratum walsbyi (strain DSM 16790 / HBSQ001) protein is Small ribosomal subunit protein uS2.